Reading from the N-terminus, the 374-residue chain is Double homeobox protein 4C (374 aa).

A compositionally biased stretch (polar residues) spans 1-10 (MALPTPSDST). 3 disordered regions span residues 1 to 24 (MALP…RRRL), 72 to 102 (SRQL…TAVT), and 218 to 374 (LQPS…YELL). DNA-binding regions (homeobox) lie at residues 19–78 (GRRR…LRQH) and 94–153 (GRRK…PGQG). The segment covering 265–274 (KSREDRDPQR) has biased composition (basic and acidic residues). Low complexity-rich tracts occupy residues 278–302 (PGPC…LAPP) and 319–329 (AGAAWEPQAGA). A compositionally biased stretch (polar residues) spans 354 to 374 (QPLQEPGRSSTVTSSLLYELL).

In terms of assembly, may interact with MYF5; regulates MYF5 expression. As to expression, expressed in muscles, as well as in primary myoblasts and myotubes (at protein level).

Its subcellular location is the nucleus. It is found in the cytoplasm. Its function is as follows. Down-regulates MYOD1 expression and may up-regulate MYF5 expression. May regulate microRNA (miRNA) transcription, up-regulating the expression of some myogenic miRNAs, including MIR1-1, MIR133A2, MIR133B and MIR206. Impairs the differentiation of myoblasts and may be involved in muscle regeneration. Reduces DUX4-induced nuclear localization of CTNNB1/beta-catenin and its subsequent activation of target genes. The sequence is that of Double homeobox protein 4C (DUX4L9) from Homo sapiens (Human).